Here is a 496-residue protein sequence, read N- to C-terminus: Trimethylamine methyltransferase MttB (496 aa).

Position 331 (Pyl331) is a non-standard amino acid, pyrrolysine.

Belongs to the trimethylamine methyltransferase family.

The catalysed reaction is Co(I)-[trimethylamine-specific corrinoid protein] + trimethylamine + H(+) = methyl-Co(III)-[trimethylamine-specific corrinoid protein] + dimethylamine. Catalyzes the transfer of a methyl group from trimethylamine to the corrinoid cofactor of MttC. The chain is Trimethylamine methyltransferase MttB from Desulfitobacterium hafniense (strain DSM 10664 / DCB-2).